The chain runs to 342 residues: N-acetyl-gamma-glutamyl-phosphate reductase (342 aa).

The active site involves Cys149.

This sequence belongs to the NAGSA dehydrogenase family. Type 1 subfamily.

It is found in the cytoplasm. It catalyses the reaction N-acetyl-L-glutamate 5-semialdehyde + phosphate + NADP(+) = N-acetyl-L-glutamyl 5-phosphate + NADPH + H(+). Its pathway is amino-acid biosynthesis; L-arginine biosynthesis; N(2)-acetyl-L-ornithine from L-glutamate: step 3/4. Functionally, catalyzes the NADPH-dependent reduction of N-acetyl-5-glutamyl phosphate to yield N-acetyl-L-glutamate 5-semialdehyde. The protein is N-acetyl-gamma-glutamyl-phosphate reductase of Jannaschia sp. (strain CCS1).